Reading from the N-terminus, the 354-residue chain is Methylthioribose-1-phosphate isomerase (354 aa).

Substrate is bound by residues 58–60 (RGA), Arg-101, and Gln-204. The Proton donor role is filled by Asp-245. Position 255–256 (255–256 (NK)) interacts with substrate.

It belongs to the eIF-2B alpha/beta/delta subunits family. MtnA subfamily.

The enzyme catalyses 5-(methylsulfanyl)-alpha-D-ribose 1-phosphate = 5-(methylsulfanyl)-D-ribulose 1-phosphate. The protein operates within amino-acid biosynthesis; L-methionine biosynthesis via salvage pathway; L-methionine from S-methyl-5-thio-alpha-D-ribose 1-phosphate: step 1/6. In terms of biological role, catalyzes the interconversion of methylthioribose-1-phosphate (MTR-1-P) into methylthioribulose-1-phosphate (MTRu-1-P). This is Methylthioribose-1-phosphate isomerase from Xanthomonas campestris pv. campestris (strain ATCC 33913 / DSM 3586 / NCPPB 528 / LMG 568 / P 25).